A 428-amino-acid chain; its full sequence is MFIDTAKIFVKSGDGGHGSVSFRREKYVPLGGPDGGDGGKGGDVTFVVDPGMTTLLDFKYKRKFVAGRGQDGQGSKCYGRDGENLTIKVPMGTIIRDVETNKVMADLSHRDDTYTICRGGKGGKGNCKFCTPTRQAPTFAEPGMPGEERWVALELKLLADVGLLGFPNVGKSTLLSVVTKAKPKIANYHFTTLKPNLGVVAVPGIEPFVMADVPGIIEGASEGVGLGLDFLRHIERTRLLIHVVDISGVEGRDAVEDFKRINEELKNYSVKLWDRPQIVVANKCDMLFDEEIFENFKAEVNKMGFDKVFKMSAATSQGVEEVIKEAARMLKDIPVTDLEIPEDERFIPEDKKFTYTINPIEEDGLKVYVVEGSFVDRLLLAVNVNDPDSLRYFHKVLNNKGIFHELREMGIEDGDMVRLNDFEFEYLL.

Residues 1 to 158 (MFIDTAKIFV…RWVALELKLL (158 aa)) enclose the Obg domain. Residues 159–331 (ADVGLLGFPN…VIKEAARMLK (173 aa)) enclose the OBG-type G domain. GTP is bound by residues 165-172 (GFPNVGKS), 190-194 (FTTLK), 212-215 (DVPG), 282-285 (NKCD), and 312-314 (SAA). 2 residues coordinate Mg(2+): serine 172 and threonine 192. The 84-residue stretch at 345–428 (RFIPEDKKFT…LNDFEFEYLL (84 aa)) folds into the OCT domain.

The protein belongs to the TRAFAC class OBG-HflX-like GTPase superfamily. OBG GTPase family. Monomer. Mg(2+) is required as a cofactor.

The protein resides in the cytoplasm. Its function is as follows. An essential GTPase which binds GTP, GDP and possibly (p)ppGpp with moderate affinity, with high nucleotide exchange rates and a fairly low GTP hydrolysis rate. Plays a role in control of the cell cycle, stress response, ribosome biogenesis and in those bacteria that undergo differentiation, in morphogenesis control. This Clostridium perfringens (strain ATCC 13124 / DSM 756 / JCM 1290 / NCIMB 6125 / NCTC 8237 / Type A) protein is GTPase Obg.